The primary structure comprises 71 residues: MQKLIILLLVAAVLMSTQALFQEKRLKEKINFLSKEKADAEKQQKRYCSDQWKSCSYPHECCRWSCNRYCA.

A signal peptide spans 1-19; it reads MQKLIILLLVAAVLMSTQA. Positions 20–46 are excised as a propeptide; the sequence is LFQEKRLKEKINFLSKEKADAEKQQKR. Cystine bridges form between cysteine 48/cysteine 62, cysteine 55/cysteine 66, and cysteine 61/cysteine 70.

Belongs to the conotoxin O2 superfamily. In terms of tissue distribution, expressed by the venom duct.

The protein resides in the secreted. The protein is Conotoxin PnMEKL-032 of Conus pennaceus (Feathered cone).